A 171-amino-acid chain; its full sequence is Histone H1, gonadal (171 aa).

Disordered regions lie at residues 1–40 and 133–171; these read AASP…AHPP and AKAK…KAKP. Residues 9–35 show a composition bias toward basic residues; that stretch reads ASPRKSPKKSPRKSPKKKSPRKRKARS. Positions 37 to 111 constitute an H15 domain; it reads AHPPVIDMIT…GATGRFRVGA (75 aa).

The protein belongs to the histone H1/H5 family. As to expression, sperm.

The protein localises to the nucleus. Its subcellular location is the chromosome. Its function is as follows. Histones H1 are necessary for the condensation of nucleosome chains into higher-order structures. The sequence is that of Histone H1, gonadal from Echinolampas crassa (Sea urchin).